The primary structure comprises 316 residues: Phosphatidylinositol mannoside acyltransferase (316 aa).

His-137 (proton acceptor) is an active-site residue. His-137 and Arg-175 together coordinate hexadecanoyl-CoA. Glu-211 is an active-site residue. Glu-240 is a hexadecanoyl-CoA binding site.

This sequence belongs to the LpxL/LpxM/LpxP family.

It localises to the cell inner membrane. It carries out the reaction a 2,6-O-bis(alpha-D-mannopyranosyl)-1-phosphatidyl-1D-myo-inositol + an acyl-CoA = a 2-O-(alpha-D-mannosyl)-6-O-(6-O-acyl-alpha-D-mannosyl)-1-phosphatidyl-1D-myo-inositol + CoA. It catalyses the reaction a 1,2-diacyl-sn-glycero-3-phospho-[alpha-D-mannopyranosyl-(1&lt;-&gt;6)-D-myo-inositol] + an acyl-CoA = a 1,2-diacyl-sn-glycero-3-phospho-[alpha-D-6-acyl-mannopyranosyl-(1&lt;-&gt;6)-D-myo-inositol] + CoA. Its pathway is phospholipid metabolism; phosphatidylinositol metabolism. Catalyzes the transfer of a palmitoyl moiety from palmitoyl-CoA to the 6-position of the mannose ring linked to the 2-position of myo-inositol in phosphatidyl-myo-inositol monomannoside (PIM1) or dimannoside (PIM2). Essential for growth and survival in axenic cultures and during macrophage infection and in a mouse model of infection. This chain is Phosphatidylinositol mannoside acyltransferase, found in Mycobacterium tuberculosis (strain ATCC 25618 / H37Rv).